The sequence spans 1044 residues: Isoleucine--tRNA ligase (1044 aa).

Residues 48–58 carry the 'HIGH' region motif; sequence PFATGLPHFGH. The short motif at 594–598 is the 'KMSKS' region element; that stretch reads KMSKS. Residue lysine 597 participates in ATP binding.

It belongs to the class-I aminoacyl-tRNA synthetase family. IleS type 2 subfamily. In terms of assembly, monomer. It depends on Zn(2+) as a cofactor.

It is found in the cytoplasm. The catalysed reaction is tRNA(Ile) + L-isoleucine + ATP = L-isoleucyl-tRNA(Ile) + AMP + diphosphate. Its function is as follows. Catalyzes the attachment of isoleucine to tRNA(Ile). As IleRS can inadvertently accommodate and process structurally similar amino acids such as valine, to avoid such errors it has two additional distinct tRNA(Ile)-dependent editing activities. One activity is designated as 'pretransfer' editing and involves the hydrolysis of activated Val-AMP. The other activity is designated 'posttransfer' editing and involves deacylation of mischarged Val-tRNA(Ile). This is Isoleucine--tRNA ligase from Borrelia hermsii (strain HS1 / DAH).